The sequence spans 245 residues: RAD51-like protein 1 (245 aa).

In terms of assembly, interacts with brc-2 and rad-51.

The protein localises to the nucleus. In terms of biological role, has a role in the homologous recombination repair (HRR) of genomic DNA during meiosis. Required for rad-51 recruitment onto ssDNA gaps generated at stalled replication fork barriers. The protein is RAD51-like protein 1 (rfs-1) of Caenorhabditis elegans.